A 123-amino-acid chain; its full sequence is MKLLLLALPVLVLLPQVIPAYSGEKKCWNRSGHCRKQCKDGEAVKDTCKNLRACCVPSNEDHRRVPMTSPTPLSDSTPGIIDDILTVRFTTDYFEVSSKKDMVEESEAGRGTETSLPNVHHSS.

The signal sequence occupies residues 1–19 (MKLLLLALPVLVLLPQVIP). 3 disulfides stabilise this stretch: cysteine 27–cysteine 54, cysteine 34–cysteine 48, and cysteine 38–cysteine 55. A propeptide spanning residues 65–123 (VPMTSPTPLSDSTPGIIDDILTVRFTTDYFEVSSKKDMVEESEAGRGTETSLPNVHHSS) is cleaved from the precursor. The span at 100–110 (KDMVEESEAGR) shows a compositional bias: basic and acidic residues. The tract at residues 100-123 (KDMVEESEAGRGTETSLPNVHHSS) is disordered. Residues 112 to 123 (TETSLPNVHHSS) are compositionally biased toward polar residues.

This sequence belongs to the beta-defensin family. In terms of processing, the three-dimensional structure formed by the three intramolecular disulfide bridges is indispensable for antimicrobial activity.

It is found in the secreted. Host defense peptide that exhibits antimicrobial activity against both Gram-negative bacteria, such as E.coli and S.typhimurium, and Gram-positive bacteria, such as S.aureus and B.subtilis. Inhibits cell adhesion of E.coli on intestinal epithelial enterocytes. Causes rapid permeabilization of both the outer and inner membrane of E.coli, leading to morphological alterations on the bacterial surface. Binds to bacterial lipopolysaccharides (LPS) with high affinity, and may thereby be involved in immunoregulation through LPS neutralization. May contribute to epididymal innate immunity and protect the sperm against attack by microorganisms. In Pan troglodytes (Chimpanzee), this protein is Defensin beta 118 (DEFB118).